We begin with the raw amino-acid sequence, 496 residues long: MDPLGARSCFVDADALPCWADVRDGEGEDVPDGGRKDAPHGGLHSPFPYRNDINKKVILWRGDVALLSCTALVNTSNETLTDKNPVSDSIFRYSGPELSEEMQKLKGCRTGEAKLTKGFNLAARYIIHTVGPKYKTKYRTAAESSLYSCYRNVLQLAKEQGMASVGFCVIATQKRCYPPEDSTHIALRTVRRFLEAHGAALEKVVFAVTEQEEGTYRRLLPLYFPRSLEEEQRSIPFLPQDIGNAEGEPVVPERQIRISEKPGGQDDDSEEEGLVKDLSVIGSHAFARMEGDVDKQRRLALQGQLSGAAMQKQHQRNYNRWLSRARTEDLSDIAALKALYQSGVDNCGRTVMVVVGRNIPVLLIDMEKALLYFIHMMDHVAAKEYVLVYFHTLTGEHNHPDSDFLKNMYDIVDVKYKKNLKALYFVHPTFRSKVSSWFFTTFTVSGLKDKVHQVESLHQLFSAVPPEQIEIPPFVLDYDARENGPFFPSQSSFLSL.

Disordered stretches follow at residues 22 to 45 (VRDG…GLHS) and 252 to 271 (PERQ…DSEE). The Macro domain occupies 44–224 (HSPFPYRNDI…TYRRLLPLYF (181 aa)). A compositionally biased stretch (basic and acidic residues) spans 254-264 (RQIRISEKPGG). In terms of domain architecture, CRAL-TRIO spans 329-483 (DLSDIAALKA…FVLDYDAREN (155 aa)).

It belongs to the GDAP2 family.

The protein is Ganglioside-induced differentiation-associated protein 2 of Xenopus tropicalis (Western clawed frog).